A 205-amino-acid polypeptide reads, in one-letter code: Probable GTP-binding protein EngB (205 aa).

Residues 27-201 enclose the EngB-type G domain; the sequence is TGIEIAFAGR…AAKLDFWFSP (175 aa). Residues 35-42, 62-66, 80-83, 147-150, and 180-182 each bind GTP; these read GRSNAGKS, GRTQL, DLPG, TKAD, and FSA. Residues S42 and T64 each coordinate Mg(2+).

The protein belongs to the TRAFAC class TrmE-Era-EngA-EngB-Septin-like GTPase superfamily. EngB GTPase family. It depends on Mg(2+) as a cofactor.

In terms of biological role, necessary for normal cell division and for the maintenance of normal septation. The sequence is that of Probable GTP-binding protein EngB from Haemophilus influenzae (strain 86-028NP).